A 287-amino-acid chain; its full sequence is MAVLAPLLAFLYAVPGLLRWVSQPYYLLSALLSVSFLLVRKVPPVCSVLPTQREDGNPCDFDWREVEILMFLSAIVMMKNRRSITVEQHIGNIFMFSKVANTILFFRLDLRMGLLYITLCIVFLMTCKPPLYLGPEHIKYFSDKTLEEELQSDGRVSWIIEFFANWSSECQSFAPIYAELSLKYNCAGLKFGKVDIGRYPEVSSRYSISPSPLSKQLPTLILFQGGREIFRRPQVDKKGRAVSWSFTQENVIREFNLNELYQKAKKIRKHQEDTINENEYNDSKKDQ.

Residues 1 to 35 (MAVLAPLLAFLYAVPGLLRWVSQPYYLLSALLSVS) form the signal peptide. The Extracellular portion of the chain corresponds to 36-112 (FLLVRKVPPV…ILFFRLDLRM (77 aa)). A helical transmembrane segment spans residues 113–133 (GLLYITLCIVFLMTCKPPLYL). The Cytoplasmic segment spans residues 134–287 (GPEHIKYFSD…NEYNDSKKDQ (154 aa)). The region spanning 135–269 (PEHIKYFSDK…LYQKAKKIRK (135 aa)) is the Thioredoxin domain. A Di-lysine motif motif is present at residues 284 to 287 (KKDQ).

Monomer. Homodimer; disulfide-linked. Occurs in both reduced and oxidized monomeric form. Oxidative conditions increase homodimerization.

It localises to the endoplasmic reticulum membrane. It is found in the mitochondrion membrane. Endoplasmic reticulum and mitochondria-associated protein that probably functions as a regulator of cellular redox state and thereby regulates protein post-translational modification, protein folding and mitochondrial activity. The polypeptide is Thioredoxin-related transmembrane protein 2 (tmx2) (Xenopus tropicalis (Western clawed frog)).